Here is a 108-residue protein sequence, read N- to C-terminus: Phosphoribosyl-AMP cyclohydrolase (108 aa).

A Mg(2+)-binding site is contributed by aspartate 78. Position 79 (cysteine 79) interacts with Zn(2+). The Mg(2+) site is built by aspartate 80 and aspartate 82. 2 residues coordinate Zn(2+): cysteine 95 and cysteine 102.

Belongs to the PRA-CH family. Homodimer. Requires Mg(2+) as cofactor. Zn(2+) serves as cofactor.

It is found in the cytoplasm. The catalysed reaction is 1-(5-phospho-beta-D-ribosyl)-5'-AMP + H2O = 1-(5-phospho-beta-D-ribosyl)-5-[(5-phospho-beta-D-ribosylamino)methylideneamino]imidazole-4-carboxamide. It participates in amino-acid biosynthesis; L-histidine biosynthesis; L-histidine from 5-phospho-alpha-D-ribose 1-diphosphate: step 3/9. Catalyzes the hydrolysis of the adenine ring of phosphoribosyl-AMP. The sequence is that of Phosphoribosyl-AMP cyclohydrolase from Nitrosopumilus maritimus (strain SCM1).